The chain runs to 230 residues: uncharacterized protein (230 aa).

A run of 7 helical transmembrane segments spans residues 8 to 28, 45 to 65, 72 to 92, 109 to 129, 141 to 161, 176 to 196, and 203 to 223; these read SLIL…TMAF, SIIL…FIIF, LVLL…FLYL, PFSL…SVIS, IYVL…LLLA, MGIL…AIIF, and IYFL…LILF.

To P.aeruginosa PA0043 and M.thermoautotrophicum MTH1451.

It is found in the cell membrane. This is an uncharacterized protein from Aquifex aeolicus (strain VF5).